The following is a 203-amino-acid chain: Gramillins biosynthetic cluster protein FGSG_00038 (203 aa).

The protein operates within mycotoxin biosynthesis. Its function is as follows. Part of the gene cluster that mediates the biosynthesis of gramillins A and B, bicyclic lipopeptides that induce cell death in maize leaves but not in wheat leaves. The nonribosomal peptide synthetase GRA1 incorporates respectively a glutamic adic (Glu), a leucine (Leu), a serine (Ser), a hydroxyglutamine (HOGln), a 2-amino decanoic acid, and 2 cysteins (CysB and CysA). The biosynthesis of 2-amino decanoic acid incorporated in gramillins could be initiated by a fatty acid synthase composed of the alpha and beta subunits FGSG_00036 and FGSG_11656. The cytochrome P450 monooxygenase FGSG_15680 could hydroxylate the fatty acid chain. Subsequent oxidation to the ketone by the oxidoreductase FGSG_00048 and transamination by aminotransferase FGSG_00049 could form 2-amino-decanoic acid. On the other hand, FGSG_15680 could also be responsible for the HO-modified glutamine at the gamma-position. Whether hydroxylation occurs on the fully assembled product or on the Gln residue prior to assembly into the gramillins requires further proof. The thioredoxin FGSG_00043 could also be required for the disulfide-bond formation between CysA and CysB. The specific involvement of the remaining proteins from the cluster is more difficult to discern, but could have broader regulatory (FGSG_00040 and FGSG_11657) or enzymatic functions (FGSG_00044 and FGSG_00045). The final C-domain of GRA1 does not possess the expected sequence of a termination CT domain, often implicated in macrocyclization and release of a cyclopeptidein fungal NRPs; and the thioesterase FGSG_00047 may act in concert with the terminal C-domain of GRA1 to catalyze the formation of the macrocyclic anhydride and release of the products. The protein is Gramillins biosynthetic cluster protein FGSG_00038 of Gibberella zeae (strain ATCC MYA-4620 / CBS 123657 / FGSC 9075 / NRRL 31084 / PH-1) (Wheat head blight fungus).